The sequence spans 119 residues: C-X-C motif chemokine 17 (119 aa).

Residues 1-22 (MKLLASPFLLLLPVMLMSMVFS) form the signal peptide. Positions 75–100 (CPCDHVKGREKKNRHQKHHRKSQRPS) are disordered. 2 cysteine pairs are disulfide-bonded: C75–C103 and C77–C110. The span at 82-98 (GREKKNRHQKHHRKSQR) shows a compositional bias: basic residues.

The protein belongs to the intercrine alpha (chemokine CxC) family. Likely to undergo an endoproteolytic process to form a four-cysteine-containing mature peptide with a canonical CXC chemokine scaffold after secretion. In terms of tissue distribution, detected in lung, trachea, lung, tongue thyroid, submaxillary gland, epididymis, and uterus tissues and at a lower level in ovary, prostate and in intestinal tissues.

It localises to the secreted. Functionally, chemokine that acts as a chemoattractant for monocytes, macrophages and dendritic cells. Plays a role in angiogenesis and possibly in the development of tumors. Acts as an anti-inflammatory in the stomach. May play a role in the innate defense against infections. Activates the C-X-C chemokine receptor GPR35 to induce a rapid and transient rise in the level of intracellular calcium ions. This chain is C-X-C motif chemokine 17 (Cxcl17), found in Mus musculus (Mouse).